A 179-amino-acid polypeptide reads, in one-letter code: UPF0227 protein VS_2073 (179 aa).

This sequence belongs to the UPF0227 family.

This is UPF0227 protein VS_2073 from Vibrio atlanticus (strain LGP32) (Vibrio splendidus (strain Mel32)).